Consider the following 244-residue polypeptide: MYKPFLEFLEKELFQRFDLQSRVIPPGLEFKVSDRGRNPATIRSWCYQSQELRKIRYTYIDAGESAQIFNSVVYPSHNYDLPLLGIDFLSFGKVKNLIVLDFQPLFQDEDYQNKYIAPLKYLHNKYPDLAQNLEMKFYDANQYFSKYLLFAKTDAETVSTRVFEAFQDYLNLYWQMLADAQALHDPEDIQRIVKAQKDYDQYSADRDPASGLFSSYFGHEWAERFLHEFLFEDAVPLAVSASKR.

It belongs to the HY2 family.

The enzyme catalyses 15,16-dihydrobiliverdin + oxidized 2[4Fe-4S]-[ferredoxin] = biliverdin IXalpha + reduced 2[4Fe-4S]-[ferredoxin] + 2 H(+). Functionally, catalyzes the two-electron reduction of biliverdin IX-alpha at the C15 methine bridge. This is 15,16-dihydrobiliverdin:ferredoxin oxidoreductase (pebA) from Nostoc punctiforme (strain ATCC 29133 / PCC 73102).